We begin with the raw amino-acid sequence, 77 residues long: MARVCQVTGKAPMSGNNVSHANNKTKRRFLPNLQNRRIWVESENRWVRLRVSNAGLRLIDKNGIDAVLADLRARGEA.

The disordered stretch occupies residues Met1–Thr25.

Belongs to the bacterial ribosomal protein bL28 family.

The polypeptide is Large ribosomal subunit protein bL28 (Paraburkholderia xenovorans (strain LB400)).